The primary structure comprises 990 residues: MGPPSSSGFYVSRAVALLLAGLVAALLLALAVLAALYGHCERVPPSELPGLRDLEAESSPPLRQKPTPTPKPSSARELAVTTTPSNWRPPGPWDQLRLPPWLVPLHYDLELWPQLRPDELPAGSLPFTGRVNITVRCTVATSRLLLHSLFQDCERAEVRGPLSPGTGNATVGRVPVDDVWFALDTEYMVLELSEPLKPGSSYELQLSFSGLVKEDLREGLFLNVYTDQGERRALLASQLEPTFARYVFPCFDEPALKATFNITMIHHPSYVALSNMPKLGQSEKEDVNGSKWTVTTFSTTPHMPTYLVAFVICDYDHVNRTERGKEIRIWARKDAIANGSADFALNITGPIFSFLEDLFNISYSLPKTDIIALPSFDNHAMENWGLMIFDESGLLLEPKDQLTEKKTLISYVVSHEIGHQWFGNLVTMNWWNNIWLNEGFASYFEFEVINYFNPKLPRNEIFFSNILHNILREDHALVTRAVAMKVENFKTSEIQELFDIFTYSKGASMARMLSCFLNEHLFVSALKSYLKTFSYSNAEQDDLWRHFQMAIDDQSTVILPATIKNIMDSWTHQSGFPVITLNVSTGVMKQEPFYLENIKNRTLLTSNDTWIVPILWIKNGTTQPLVWLDQSSKVFPEMQVSDSDHDWVILNLNMTGYYRVNYDKLGWKKLNQQLEKDPKAIPVIHRLQLIDDAFSLSKNNYIEIETALELTKYLAEEDEIIVWHTVLVNLVTRDLVSEVNIYDIYSLLKRYLLKRLNLIWNIYSTIIRENVLALQDDYLALISLEKLFVTACWLGLEDCLQLSKELFAKWVDHPENEIPYPIKDVVLCYGIALGSDKEWDILLNTYTNTTNKEEKIQLAYAMSCSKDPWILNRYMEYAISTSPFTSNETNIIEVVASSEVGRYVAKDFLVNNWQAVSKRYGTQSLINLIYTIGRTVTTDLQIVELQQFFSNMLEEHQRIRVHANLQTIKNENLKNKKLSARIAAWLRRNT.

The Cytoplasmic segment spans residues glycine 2–arginine 13. Residues alanine 14–alanine 34 form a helical; Signal-anchor for type II membrane protein membrane-spanning segment. The Lumenal portion of the chain corresponds to alanine 35 to threonine 990. The interval leucine 48–glycine 91 is disordered. Asparagine 132 and asparagine 168 each carry an N-linked (GlcNAc...) asparagine glycan. A substrate-binding site is contributed by glutamate 240. N-linked (GlcNAc...) asparagine glycosylation is found at asparagine 261, asparagine 288, asparagine 319, and asparagine 346. A substrate-binding site is contributed by histidine 379–asparagine 383. Position 415 (histidine 415) interacts with Zn(2+). The Proton acceptor role is filled by glutamate 416. Zn(2+)-binding residues include histidine 419 and glutamate 438. Tyrosine 503 functions as the Proton donor in the catalytic mechanism. N-linked (GlcNAc...) asparagine glycans are attached at residues asparagine 607 and asparagine 653.

The protein belongs to the peptidase M1 family. Homodimer. Requires Zn(2+) as cofactor. In terms of processing, N-glycosylated. In terms of tissue distribution, specifically expressed in placenta and not in other tissues. Mainly found at the cell surface region of the extravillous trophoblasts. Detected on extravillous trophoblasts in the outer layer of the chorion laeve in the fetal membrane Not detected on either fetal amnionic epithelial cells or maternal decidual cells. Also detected in the migrating extravillous trophoblasts in the maternal decidual tissues (at protein level).

Its subcellular location is the membrane. With respect to regulation, inhibited by bestatin. In terms of biological role, metalloprotease which may be important for placentation by regulating biological activity of key peptides at the embryo-maternal interface. On synthetic substrates it shows a marked preference for Leu-4-methylcoumaryl-7-amide (Leu-MCA) over Met-MCA, Arg-LCA and Lys-LCA. Cleaves the N-terminal amino acid of several peptides such as angiotensin-3, kisspeptin-10 and endokinin C. This is Aminopeptidase Q from Homo sapiens (Human).